A 981-amino-acid polypeptide reads, in one-letter code: Echinoderm microtubule-associated protein-like 4 (981 aa).

Residue Met-1 is modified to N-acetylmethionine. Disordered regions lie at residues 1-20 (MDGF…TSDV) and 57-205 (DHVA…PKLI). Residues 1–249 (MDGFAGSLDD…IPSDVDNYDD (249 aa)) form a microtubule-binding region. Residues Ser-7, Ser-13, Ser-16, and Ser-61 each carry the phosphoserine modification. The stretch at 14–63 (AASTSDVQDRLSALESRVQQQEDEITVLKAALADVLRRLAISEDHVASVK) forms a coiled coil. Thr-96 bears the Phosphothreonine mark. Residues 114 to 134 (GTEKKKEKPQGQREKKEESHS) are compositionally biased toward basic and acidic residues. Residue Ser-134 is modified to Phosphoserine; by NEK7. Residues 137 to 155 (QSPQIRASPSPQPSSQPLQ) are compositionally biased toward low complexity. Residue Ser-144 is modified to Phosphoserine; by NEK6. The residue at position 146 (Ser-146) is a Phosphoserine; by NEK7. Ser-171 is subject to Phosphoserine. Residues 176-193 (SPAEKSHNSWENSDDSRN) show a composition bias toward basic and acidic residues. Phosphoserine is present on Ser-200. At Thr-201 the chain carries Phosphothreonine. At Tyr-226 the chain carries Phosphotyrosine. The residue at position 237 (Thr-237) is a Phosphothreonine. 5 WD repeats span residues 259–297 (LKLE…LFNY), 301–348 (TQRH…VWDS), 356–396 (IIGL…VWDW), 403–438 (AEIK…FWTW), and 445–484 (RKQG…IWSK). Thr-490 carries the phosphothreonine; by NEK6 modification. WD repeat units lie at residues 500–538 (QISK…LWDH), 543–579 (EREI…LRGT), 582–621 (DGFQ…LWNS), 625–662 (RLEW…VLDA), 668–704 (VSIH…LYVV), 711–750 (YSRY…YWDI), 760–818 (RSDC…LFQY), and 825–864 (APSH…QWKL). Thr-609 carries the phosphothreonine; by NEK6 and NEK7 modification. The span at 881-893 (LTKAPVSSTESVI) shows a compositional bias: polar residues. Residues 881-981 (LTKAPVSSTE…EDQQDPSPSS (101 aa)) form a disordered region. Residues Ser-891 and Ser-895 each carry the phosphoserine modification. Thr-897 and Thr-899 each carry phosphothreonine. Ser-903 bears the Phosphoserine mark. A compositionally biased stretch (polar residues) spans 916–931 (ISSSPTLLENSLEQTV). Acidic residues predominate over residues 937-946 (HSEEESEEGS). Ser-978 is subject to Phosphoserine. The residue at position 981 (Ser-981) is a Phosphoserine; by NEK6 and NEK7.

This sequence belongs to the WD repeat EMAP family. In terms of assembly, homotrimer; self-association is mediated by the N-terminal coiled coil. Interacts (via WD repeats) with NUDC. Interacts with alpha- and beta-tubulin during mitosis. Post-translationally, phosphorylated during mitosis. Phosphorylation at Ser-144 and Ser-146 promotes its dissociation from microtubules during mitosis which is required for efficient chromosome congression.

The protein localises to the cytoplasm. The protein resides in the cytoskeleton. Its subcellular location is the spindle. It is found in the microtubule organizing center. It localises to the midbody. Essential for the formation and stability of microtubules (MTs). Required for the organization of the mitotic spindle and for the proper attachment of kinetochores to MTs. Promotes the recruitment of NUDC to the mitotic spindle for mitotic progression. This is Echinoderm microtubule-associated protein-like 4 (EML4) from Homo sapiens (Human).